Here is a 567-residue protein sequence, read N- to C-terminus: Urease subunit alpha (567 aa).

Residues 129–567 (GGVDTHIHFI…LPMAQRYFLF (439 aa)) enclose the Urease domain. Histidine 134, histidine 136, and lysine 217 together coordinate Ni(2+). N6-carboxylysine is present on lysine 217. Histidine 219 is a binding site for substrate. Residues histidine 246 and histidine 272 each contribute to the Ni(2+) site. Histidine 320 (proton donor) is an active-site residue. Aspartate 360 serves as a coordination point for Ni(2+).

Belongs to the metallo-dependent hydrolases superfamily. Urease alpha subunit family. As to quaternary structure, heterotrimer of UreA (gamma), UreB (beta) and UreC (alpha) subunits. Three heterotrimers associate to form the active enzyme. It depends on Ni cation as a cofactor. Post-translationally, carboxylation allows a single lysine to coordinate two nickel ions.

It localises to the cytoplasm. It catalyses the reaction urea + 2 H2O + H(+) = hydrogencarbonate + 2 NH4(+). Its pathway is nitrogen metabolism; urea degradation; CO(2) and NH(3) from urea (urease route): step 1/1. In Aliivibrio fischeri (strain MJ11) (Vibrio fischeri), this protein is Urease subunit alpha.